Reading from the N-terminus, the 120-residue chain is FK506-binding protein 1B (120 aa).

The interval 1 to 26 (MGLEKQTLRMGNGKDHPQPGDPVELN) is disordered. The region spanning 20–115 (GDPVELNYTG…VFEVELLKIK (96 aa)) is the PPIase FKBP-type domain.

The protein belongs to the FKBP-type PPIase family. FKBP1 subfamily.

The enzyme catalyses [protein]-peptidylproline (omega=180) = [protein]-peptidylproline (omega=0). With respect to regulation, inhibited by both FK506 and rapamycin. PPIases accelerate the folding of proteins. It catalyzes the cis-trans isomerization of proline imidic peptide bonds in oligopeptides. This Aspergillus fumigatus (strain ATCC MYA-4609 / CBS 101355 / FGSC A1100 / Af293) (Neosartorya fumigata) protein is FK506-binding protein 1B (fpr1B).